Reading from the N-terminus, the 711-residue chain is Polyribonucleotide nucleotidyltransferase (711 aa).

Mg(2+) contacts are provided by aspartate 486 and aspartate 492. One can recognise a KH domain in the interval 553-612; sequence PRIHTIKINPDKIKDVIGKGGSVIRALTEETGTTIEIEDDGTVKIAATDGEKAKNAIRRI. The region spanning 622–690 is the S1 motif domain; the sequence is GRVYNGKVTR…RQGRIRLSIK (69 aa). A disordered region spans residues 689-711; that stretch reads IKEATEQSQPAAAPEAPAAEQGE. Residues 694-711 show a composition bias toward low complexity; that stretch reads EQSQPAAAPEAPAAEQGE.

This sequence belongs to the polyribonucleotide nucleotidyltransferase family. Component of the RNA degradosome, which is a multiprotein complex involved in RNA processing and mRNA degradation. Requires Mg(2+) as cofactor.

It is found in the cytoplasm. The catalysed reaction is RNA(n+1) + phosphate = RNA(n) + a ribonucleoside 5'-diphosphate. Involved in mRNA degradation. Catalyzes the phosphorolysis of single-stranded polyribonucleotides processively in the 3'- to 5'-direction. The polypeptide is Polyribonucleotide nucleotidyltransferase (Escherichia fergusonii (strain ATCC 35469 / DSM 13698 / CCUG 18766 / IAM 14443 / JCM 21226 / LMG 7866 / NBRC 102419 / NCTC 12128 / CDC 0568-73)).